The following is a 624-amino-acid chain: DNA mismatch repair protein MutL (624 aa).

Residues 355 to 377 (EESAPERKLPEKTPEPSYSPMKL) form a disordered region. Over residues 358–368 (APERKLPEKTP) the composition is skewed to basic and acidic residues.

Belongs to the DNA mismatch repair MutL/HexB family.

In terms of biological role, this protein is involved in the repair of mismatches in DNA. It is required for dam-dependent methyl-directed DNA mismatch repair. May act as a 'molecular matchmaker', a protein that promotes the formation of a stable complex between two or more DNA-binding proteins in an ATP-dependent manner without itself being part of a final effector complex. This chain is DNA mismatch repair protein MutL, found in Bacillus velezensis (strain DSM 23117 / BGSC 10A6 / LMG 26770 / FZB42) (Bacillus amyloliquefaciens subsp. plantarum).